Reading from the N-terminus, the 214-residue chain is Calcineurin B homologous protein 3 (214 aa).

Glycine 2 is lipidated: N-myristoyl glycine. The EF-hand domain maps to 110-145 (CRKDKLRFLFNMYDTDNDSKITLEEYRKVVEELLSG). Ca(2+) contacts are provided by aspartate 123, aspartate 125, aspartate 127, lysine 129, and glutamate 134.

It belongs to the calcineurin regulatory subunit family. CHP subfamily. As to quaternary structure, monomer. Homodimer.

It localises to the nucleus. The protein resides in the cytoplasm. It is found in the membrane. Its subcellular location is the cell membrane. The protein localises to the cell projection. It localises to the lamellipodium. The protein resides in the ruffle membrane. Functions as an integral cofactor in cell pH regulation by controlling plasma membrane-type Na(+)/H(+) exchange activity. Promotes the induction of hematopoietic stem cell differentiation toward megakaryocytic lineage. Essential for the coupling of ERK cascade activation with the expression of ETS family genes in megakaryocytic differentiation. Also involved in granulocytic differentiation in a ERK-dependent manner. Inhibits the phosphatase activity of calcineurin. This Xenopus tropicalis (Western clawed frog) protein is Calcineurin B homologous protein 3 (tesc).